A 485-amino-acid polypeptide reads, in one-letter code: Membrane-bound lytic murein transglycosylase F (485 aa).

Positions M1 to E29 are cleaved as a signal peptide. Residues K30–V267 form a non-LT domain region. The tract at residues D268–M485 is LT domain. E314 is a catalytic residue. Residues E465–M485 form a disordered region.

It in the N-terminal section; belongs to the bacterial solute-binding protein 3 family. In the C-terminal section; belongs to the transglycosylase Slt family.

It is found in the cell outer membrane. The catalysed reaction is Exolytic cleavage of the (1-&gt;4)-beta-glycosidic linkage between N-acetylmuramic acid (MurNAc) and N-acetylglucosamine (GlcNAc) residues in peptidoglycan, from either the reducing or the non-reducing ends of the peptidoglycan chains, with concomitant formation of a 1,6-anhydrobond in the MurNAc residue.. Its function is as follows. Murein-degrading enzyme that degrades murein glycan strands and insoluble, high-molecular weight murein sacculi, with the concomitant formation of a 1,6-anhydromuramoyl product. Lytic transglycosylases (LTs) play an integral role in the metabolism of the peptidoglycan (PG) sacculus. Their lytic action creates space within the PG sacculus to allow for its expansion as well as for the insertion of various structures such as secretion systems and flagella. This is Membrane-bound lytic murein transglycosylase F from Pseudomonas putida (strain GB-1).